The sequence spans 380 residues: Cytochrome b (380 aa).

The next 4 helical transmembrane spans lie at 34–54, 78–99, 114–134, and 179–199; these read FGSLLGICLATQILTGLLLAA, WLIRNLHANGASFFFICIYLHI, WNTGIILLLTLMATAFVGYVL, and FFTLHFLLPFMIAGLTLIHLT. The heme b site is built by His84 and His98. The heme b site is built by His183 and His197. His202 provides a ligand contact to a ubiquinone. Helical transmembrane passes span 227–247, 289–309, 321–341, and 348–368; these read TKDILGFILLLLPLTTLALFS, LGGVLALAASVLILFLIPLLH, LSQLLFWTLVANLTILTWIGS, and FIIIGQLASLTYFTILLILFP.

This sequence belongs to the cytochrome b family. As to quaternary structure, the cytochrome bc1 complex contains 11 subunits: 3 respiratory subunits (MT-CYB, CYC1 and UQCRFS1), 2 core proteins (UQCRC1 and UQCRC2) and 6 low-molecular weight proteins (UQCRH/QCR6, UQCRB/QCR7, UQCRQ/QCR8, UQCR10/QCR9, UQCR11/QCR10 and a cleavage product of UQCRFS1). This cytochrome bc1 complex then forms a dimer. Heme b serves as cofactor.

It localises to the mitochondrion inner membrane. Its function is as follows. Component of the ubiquinol-cytochrome c reductase complex (complex III or cytochrome b-c1 complex) that is part of the mitochondrial respiratory chain. The b-c1 complex mediates electron transfer from ubiquinol to cytochrome c. Contributes to the generation of a proton gradient across the mitochondrial membrane that is then used for ATP synthesis. The sequence is that of Cytochrome b (MT-CYB) from Eudyptes chrysocome (Western rockhopper penguin).